The following is a 663-amino-acid chain: Probable potassium transport system protein Kup (663 aa).

The tract at residues 1–23 is disordered; it reads MSDNPSSRAGPEVVPTPPPSPAA. 12 consecutive transmembrane segments (helical) span residues 81–101, 137–157, 173–193, 201–221, 224–244, 248–268, 283–303, 315–335, 373–393, 399–419, 433–453, and 455–475; these read PANV…VVTF, LLII…VITP, PALE…LFFI, VGAV…ILGV, ILFD…AFFA, WHGF…EALY, WLLV…AILL, LLVP…AAIV, IYVP…VLGF, LAAA…LLFH, AWPL…ANIV, and VEEG…LLST.

This sequence belongs to the HAK/KUP transporter (TC 2.A.72) family.

It localises to the cell inner membrane. It carries out the reaction K(+)(in) + H(+)(in) = K(+)(out) + H(+)(out). Functionally, transport of potassium into the cell. Likely operates as a K(+):H(+) symporter. This Anaeromyxobacter sp. (strain Fw109-5) protein is Probable potassium transport system protein Kup.